The chain runs to 190 residues: MNFLLSWVHWTLALLLYLHHAKWSQAAPTTEGEQKAHGVVEFMDVYRRSYCHPIETLVDIFQEYPDEIEYIFKPSCVPLMRCGGCCSDEALECVPTSESNITMQIMRVKPHQSQHIGEMSFLQHSRCECRPKKVRTKPENHCEPCSERRKHLFVQDPQTCKCSCKNTDSRCKARQLELNERTCRCDKPRR.

The first 26 residues, 1 to 26 (MNFLLSWVHWTLALLLYLHHAKWSQA), serve as a signal peptide directing secretion. 3 disulfide bridges follow: Cys-51–Cys-93, Cys-82–Cys-127, and Cys-86–Cys-129. The N-linked (GlcNAc...) asparagine glycan is linked to Asn-100.

This sequence belongs to the PDGF/VEGF growth factor family. Homodimer; disulfide-linked. Also found as heterodimer with PGF. Interacts with NRP1. Interacts with isoform 2 of BSG. Interacts with CD82; this interaction inhibits VEGFA-mediated signaling pathway.

The protein resides in the secreted. In terms of biological role, growth factor active in angiogenesis, vasculogenesis and endothelial cell growth. Induces endothelial cell proliferation, promotes cell migration, inhibits apoptosis and induces permeabilization of blood vessels. Binds to the FLT1/VEGFR1 and KDR/VEGFR2 receptors, heparan sulfate and heparin. Binding to NRP1 receptor initiates a signaling pathway needed for motor neuron axon guidance and cell body migration, including for the caudal migration of facial motor neurons from rhombomere 4 to rhombomere 6 during embryonic development. Also binds the DEAR/FBXW7-AS1 receptor. The sequence is that of Vascular endothelial growth factor A (VEGFA) from Mesocricetus auratus (Golden hamster).